The following is a 223-amino-acid chain: Ribonuclease S-2 (223 aa).

Positions 1-22 are cleaved as a signal peptide; the sequence is MAKSQLVSALFVFFFSLSPIYG. Cys38 and Cys44 are oxidised to a cystine. A glycan (N-linked (GlcNAc...) asparagine) is linked at Asn51. His55 acts as the Proton donor in catalysis. RNA is bound by residues His55 and 94–95; that span reads QL. Disulfide bonds link Cys71–Cys119, Cys178–Cys211, and Cys194–Cys205. Gln112 is an active-site residue. 115 to 116 contributes to the RNA binding site; the sequence is KH. Residue His116 is the Proton acceptor of the active site.

Belongs to the RNase T2 family. As to expression, pistil.

The protein localises to the secreted. The protein resides in the extracellular space. The enzyme catalyses a ribonucleotidyl-ribonucleotide-RNA + H2O = a 3'-end 3'-phospho-ribonucleotide-RNA + a 5'-end dephospho-ribonucleoside-RNA + H(+). Its function is as follows. Self-incompatibility (SI) is the inherited ability of a flowering plant to prevent self-fertilization by discriminating between self and non-self pollen during pollination. In many species of the Solanaceae, self-incompatibility is controlled by the single, multiallelic locus S. This stylar glycoprotein is associated with expression of self-incompatibility in potato. The chain is Ribonuclease S-2 from Solanum tuberosum (Potato).